The following is a 202-amino-acid chain: UPF0301 protein ML0028 (202 aa).

It belongs to the UPF0301 (AlgH) family.

This Mycobacterium leprae (strain TN) protein is UPF0301 protein ML0028.